A 250-amino-acid polypeptide reads, in one-letter code: Peroxiredoxin (250 aa).

The region spanning 6 to 163 (PLIGERFPEM…ILRIVKALKL (158 aa)) is the Thioredoxin domain. Residue cysteine 50 is the Cysteine sulfenic acid (-SOH) intermediate of the active site. Position 126 (arginine 126) interacts with substrate. A disulfide bridge links cysteine 207 with cysteine 213.

Belongs to the peroxiredoxin family. Prx6 subfamily. Homodecamer. Pentamer of dimers that assemble into a ring structure.

Its subcellular location is the cytoplasm. The enzyme catalyses a hydroperoxide + [thioredoxin]-dithiol = an alcohol + [thioredoxin]-disulfide + H2O. Thiol-specific peroxidase that catalyzes the reduction of hydrogen peroxide and organic hydroperoxides to water and alcohols, respectively. Plays a role in cell protection against oxidative stress by detoxifying peroxides. This is Peroxiredoxin from Aeropyrum pernix (strain ATCC 700893 / DSM 11879 / JCM 9820 / NBRC 100138 / K1).